An 82-amino-acid chain; its full sequence is Sulfur carrier protein TusA (82 aa).

Residue Cys19 is the Cysteine persulfide intermediate of the active site.

The protein belongs to the sulfur carrier protein TusA family.

Its subcellular location is the cytoplasm. Its function is as follows. Sulfur carrier protein which probably makes part of a sulfur-relay system. The sequence is that of Sulfur carrier protein TusA from Photobacterium profundum (strain SS9).